We begin with the raw amino-acid sequence, 225 residues long: Small ribosomal subunit protein eS1 (225 aa).

A compositionally biased stretch (acidic residues) spans 206-216; the sequence is PVEEPAAEEVA. Residues 206 to 225 are disordered; it reads PVEEPAAEEVAEAPAAETQE.

It belongs to the eukaryotic ribosomal protein eS1 family.

This chain is Small ribosomal subunit protein eS1, found in Methanococcus maripaludis (strain C5 / ATCC BAA-1333).